Consider the following 608-residue polypeptide: Isocitrate dehydrogenase kinase/phosphatase (608 aa).

ATP is bound by residues 327–333 (APGIKGL) and Lys348. Asp383 is an active-site residue.

The protein belongs to the AceK family.

The protein localises to the cytoplasm. It carries out the reaction L-seryl-[isocitrate dehydrogenase] + ATP = O-phospho-L-seryl-[isocitrate dehydrogenase] + ADP + H(+). Functionally, bifunctional enzyme which can phosphorylate or dephosphorylate isocitrate dehydrogenase (IDH) on a specific serine residue. This is a regulatory mechanism which enables bacteria to bypass the Krebs cycle via the glyoxylate shunt in response to the source of carbon. When bacteria are grown on glucose, IDH is fully active and unphosphorylated, but when grown on acetate or ethanol, the activity of IDH declines drastically concomitant with its phosphorylation. This is Isocitrate dehydrogenase kinase/phosphatase from Burkholderia ambifaria (strain ATCC BAA-244 / DSM 16087 / CCUG 44356 / LMG 19182 / AMMD) (Burkholderia cepacia (strain AMMD)).